Consider the following 449-residue polypeptide: Probable glycine dehydrogenase (decarboxylating) subunit 1 (449 aa).

The protein belongs to the GcvP family. N-terminal subunit subfamily. The glycine cleavage system is composed of four proteins: P, T, L and H. In this organism, the P 'protein' is a heterodimer of two subunits.

The enzyme catalyses N(6)-[(R)-lipoyl]-L-lysyl-[glycine-cleavage complex H protein] + glycine + H(+) = N(6)-[(R)-S(8)-aminomethyldihydrolipoyl]-L-lysyl-[glycine-cleavage complex H protein] + CO2. Functionally, the glycine cleavage system catalyzes the degradation of glycine. The P protein binds the alpha-amino group of glycine through its pyridoxal phosphate cofactor; CO(2) is released and the remaining methylamine moiety is then transferred to the lipoamide cofactor of the H protein. This is Probable glycine dehydrogenase (decarboxylating) subunit 1 from Sulfurisphaera tokodaii (strain DSM 16993 / JCM 10545 / NBRC 100140 / 7) (Sulfolobus tokodaii).